We begin with the raw amino-acid sequence, 89 residues long: Small ribosomal subunit protein uS15 (89 aa).

This sequence belongs to the universal ribosomal protein uS15 family. In terms of assembly, part of the 30S ribosomal subunit. Forms a bridge to the 50S subunit in the 70S ribosome, contacting the 23S rRNA.

Its function is as follows. One of the primary rRNA binding proteins, it binds directly to 16S rRNA where it helps nucleate assembly of the platform of the 30S subunit by binding and bridging several RNA helices of the 16S rRNA. In terms of biological role, forms an intersubunit bridge (bridge B4) with the 23S rRNA of the 50S subunit in the ribosome. The polypeptide is Small ribosomal subunit protein uS15 (Azorhizobium caulinodans (strain ATCC 43989 / DSM 5975 / JCM 20966 / LMG 6465 / NBRC 14845 / NCIMB 13405 / ORS 571)).